Here is a 684-residue protein sequence, read N- to C-terminus: Protein SEEDLING PLASTID DEVELOPMENT 1 (684 aa).

The N-terminal 78 residues, M1 to S78, are a transit peptide targeting the chloroplast. The interval S33 to A91 is disordered. Residues A50 to P88 show a composition bias toward low complexity. G220 to T227 contributes to the ATP binding site. A disordered region spans residues P651 to D684. The span at K657–S667 shows a compositional bias: low complexity.

It belongs to the ycf45 family.

The protein resides in the plastid. The protein localises to the chloroplast membrane. It is found in the chloroplast envelope. Functionally, required during eoplast (a highly reduced plastid type present during the degreening and dehydration stages of seed maturation) development in embryos and early stages of eoplast redifferentiation during seedling growth. The polypeptide is Protein SEEDLING PLASTID DEVELOPMENT 1 (Arabidopsis thaliana (Mouse-ear cress)).